The following is a 189-amino-acid chain: Potassium-transporting ATPase KdpC subunit (189 aa).

Residues Pro6–Val26 form a helical membrane-spanning segment.

The protein belongs to the KdpC family. In terms of assembly, the system is composed of three essential subunits: KdpA, KdpB and KdpC.

It localises to the cell inner membrane. Its function is as follows. Part of the high-affinity ATP-driven potassium transport (or Kdp) system, which catalyzes the hydrolysis of ATP coupled with the electrogenic transport of potassium into the cytoplasm. This subunit acts as a catalytic chaperone that increases the ATP-binding affinity of the ATP-hydrolyzing subunit KdpB by the formation of a transient KdpB/KdpC/ATP ternary complex. The chain is Potassium-transporting ATPase KdpC subunit from Trichlorobacter lovleyi (strain ATCC BAA-1151 / DSM 17278 / SZ) (Geobacter lovleyi).